Consider the following 854-residue polypeptide: MDFSMVAGAAAYNEKSGRITSLSLLFQKVFAQIFPQWRKGNTEECLPYKCSETGALGENYSWQIPINHNDFKILKNNERQLCEVLQNKFGCISTLVSPVQEGNSKSLQVFRKMLTPRIELSVWKDDLTTHAVDAVVNAANEDLLHGGGLALALVKAGGFEIQEESKQFVARYGKVSAGEIAVTGAGRLPCKQIIHAVGPRWMEWDKQGCTGKLQRAIVSILNYVIYKNTHIKTVAIPALSSGIFQFPLNLCTKTIVETIRVSLQGKPMMSNLKEIHLVSNEDPTVAAFKAASEFILGKSELGQETTPSFNAMVVNNLTLQIVQGHIEWQTADVIVNSVNPHDITVGPVAKSILQQAGVEMKSEFLATKAKQFQRSQLVLVTKGFNLFCKYIYHVLWHSEFPKPQILKHAMKECLEKCIEQNITSISFPALGTGNMEIKKETAAEILFDEVLTFAKDHVKHQLTVKFVIFPTDLEIYKAFSSEMAKRSKMLSLNNYSVPQSTREEKRENGLEARSPAINLMGFNVEEMYEAHAWIQRILSLQNHHIIENNHILYLGRKEHDILSQLQKTSSVSITEIISPGRTELEIEGARADLIEVVMNIEDMLCKVQEEMARKKERGLWRSLGQWTIQQQKTQDEMKENIIFLKCPVPPTQELLDQKKQFEKCGLQVLKVEKIDNEVLMAAFQRKKKMMEEKLHRQPVSHRLFQQVPYQFCNVVCRVGFQRMYSTPCDPKYGAGIYFTKNLKNLAEKAKKISAADKLIYVFEAEVLTGFFCQGHPLNIVPPPLSPGAIDGHDSVVDNVSSPETFVIFSGMQAIPQYLWTCTQEYVQSQDYSSGPMRPFAQHPWRGFASGSPVD.

Macro domains follow at residues 107–296 and 306–487; these read LQVF…EFIL and TPSF…AKRS. A PARP catalytic domain is found at 628 to 850; that stretch reads IQQQKTQDEM…QHPWRGFASG (223 aa).

Belongs to the ARTD/PARP family. In terms of assembly, forms a stable complex with E3 ligase DTX3L; the interaction is required for PARP9 mediated ADP-ribosylation of ubiquitin. Interacts (via PARP catalytic domain) with DTX3L (via N-terminus). Forms a complex with STAT1 and DTX3L independently of IFNB1 or IFNG-mediated STAT1 'Tyr-701' phosphorylation. Forms a complex with STAT1, DTX3L and histone H2B H2BC9/H2BJ; the interaction is likely to induce H2BC9/H2BJ ubiquitination. Interacts (via N-terminus) with STAT1. Interacts with PARP14 in IFNG-stimulated macrophages; the interaction prevents PARP14-mediated STAT1 and STAT6 ADP-riboslylation. Interacts with PARP1 (when poly-ADP-ribosylated). Post-translationally, ADP-ribosylated by PARP14. As to expression, expressed in lymphocyte-rich tissues, spleen, lymph nodes, peripheral blood lymphocytes and colonic mucosa. Expressed in macrophages. Also expressed in nonhematopoietic tissues such as heart and skeletal muscle. Isoform 2 is the predominant form. Most abundantly expressed in lymphomas with a brisk host inflammatory response. In diffuse large B-cell lymphomas tumors, expressed specifically by malignant B-cells.

The protein resides in the cytoplasm. Its subcellular location is the cytosol. It localises to the nucleus. It carries out the reaction [protein]-C-terminal glycine + NAD(+) = [protein]-C-terminal O-(ADP-D-ribosyl)-glycine + nicotinamide. Its activity is regulated as follows. Binding to poly(ADP-ribose) does not affect its activity. In terms of biological role, ADP-ribosyltransferase which, in association with E3 ligase DTX3L, plays a role in DNA damage repair and in immune responses including interferon-mediated antiviral defenses. Within the complex, enhances DTX3L E3 ligase activity which is further enhanced by PARP9 binding to poly(ADP-ribose). In association with DTX3L and in presence of E1 and E2 enzymes, mediates NAD(+)-dependent mono-ADP-ribosylation of ubiquitin which prevents ubiquitin conjugation to substrates such as histones. During DNA repair, PARP1 recruits PARP9/BAL1-DTX3L complex to DNA damage sites via PARP9 binding to ribosylated PARP1. Subsequent PARP1-dependent PARP9/BAL1-DTX3L-mediated ubiquitination promotes the rapid and specific recruitment of 53BP1/TP53BP1, UIMC1/RAP80, and BRCA1 to DNA damage sites. In response to DNA damage, PARP9-DTX3L complex is required for efficient non-homologous end joining (NHEJ); the complex function is negatively modulated by PARP9 activity. Dispensable for B-cell receptor (BCR) assembly through V(D)J recombination and class switch recombination (CSR). In macrophages, positively regulates pro-inflammatory cytokines production in response to IFNG stimulation by suppressing PARP14-mediated STAT1 ADP-ribosylation and thus promoting STAT1 phosphorylation. Also suppresses PARP14-mediated STAT6 ADP-ribosylation. This chain is Protein mono-ADP-ribosyltransferase PARP9 (PARP9), found in Homo sapiens (Human).